The chain runs to 107 residues: Translation initiation factor IF-1, chloroplastic (107 aa).

The S1-like domain maps to 8–83 (REKKNPREAK…SKGRIIYRLP (76 aa)). The segment at 81 to 107 (RLPHKDSKRTEDSKDTEDLKDTKDSKD) is disordered. The segment covering 83-107 (PHKDSKRTEDSKDTEDLKDTKDSKD) has biased composition (basic and acidic residues).

Belongs to the IF-1 family. In terms of assembly, component of the 30S ribosomal translation pre-initiation complex which assembles on the 30S ribosome in the order IF-2 and IF-3, IF-1 and N-formylmethionyl-tRNA(fMet); mRNA recruitment can occur at any time during PIC assembly.

Its subcellular location is the plastid. It localises to the chloroplast. Functionally, one of the essential components for the initiation of protein synthesis. Stabilizes the binding of IF-2 and IF-3 on the 30S subunit to which N-formylmethionyl-tRNA(fMet) subsequently binds. Helps modulate mRNA selection, yielding the 30S pre-initiation complex (PIC). Upon addition of the 50S ribosomal subunit IF-1, IF-2 and IF-3 are released leaving the mature 70S translation initiation complex. The sequence is that of Translation initiation factor IF-1, chloroplastic from Saccharum hybrid (Sugarcane).